Reading from the N-terminus, the 450-residue chain is 23S rRNA (uracil(1939)-C(5))-methyltransferase RlmD (450 aa).

Residues 12-70 (SKQLSAKLSLSVNQLDHLGAGIAQHQGKVVFIPGALPDETVTVQLTEQKKNYARAKLIK) form the TRAM domain. Residues C83, C89, C92, and C171 each contribute to the [4Fe-4S] cluster site. Positions 283, 312, 317, 333, 360, and 380 each coordinate S-adenosyl-L-methionine. C406 functions as the Nucleophile in the catalytic mechanism.

The protein belongs to the class I-like SAM-binding methyltransferase superfamily. RNA M5U methyltransferase family. RlmD subfamily.

It catalyses the reaction uridine(1939) in 23S rRNA + S-adenosyl-L-methionine = 5-methyluridine(1939) in 23S rRNA + S-adenosyl-L-homocysteine + H(+). Catalyzes the formation of 5-methyl-uridine at position 1939 (m5U1939) in 23S rRNA. The protein is 23S rRNA (uracil(1939)-C(5))-methyltransferase RlmD of Shewanella baltica (strain OS223).